The chain runs to 151 residues: MERALLILKPDAVQRGLIGAIISRFEQRGLKFQGLKLMQVDEALARRHYAEHEGKSFFNGLVSYITSAPVVVAVVAGKPGTVELVRAMVGATNPAKAAPGTIRGDFGVDIGRNLIHASDSPESGERETAIFFQPHELIGEWNRALDNWIYE.

Residues K9, F57, R86, T92, R103, and N113 each contribute to the ATP site. H116 acts as the Pros-phosphohistidine intermediate in catalysis.

It belongs to the NDK family. As to quaternary structure, homotetramer. Mg(2+) serves as cofactor.

The protein resides in the cytoplasm. The enzyme catalyses a 2'-deoxyribonucleoside 5'-diphosphate + ATP = a 2'-deoxyribonucleoside 5'-triphosphate + ADP. It catalyses the reaction a ribonucleoside 5'-diphosphate + ATP = a ribonucleoside 5'-triphosphate + ADP. Functionally, major role in the synthesis of nucleoside triphosphates other than ATP. The ATP gamma phosphate is transferred to the NDP beta phosphate via a ping-pong mechanism, using a phosphorylated active-site intermediate. The chain is Nucleoside diphosphate kinase from Chloroflexus aurantiacus (strain ATCC 29364 / DSM 637 / Y-400-fl).